A 636-amino-acid chain; its full sequence is DNA-dependent metalloprotease SPRTN (636 aa).

Residues 19-42 are disordered; sequence QETPAAGWPDEDCPSSKRRRVDPS. A SprT-like domain is found at 76–183; the sequence is RAMFLQFNDK…ASGTNITIYH (108 aa). H141 lines the Zn(2+) pocket. Residue E142 is part of the active site. The Zn(2+) site is built by H145 and H160. Disordered regions lie at residues 238–382 and 398–430; these read TYTK…GKQR and RGASAVGSSKSSTDASTADYRSNSALDAKPSGK. The span at 241-268 shows a compositional bias: basic and acidic residues; the sequence is KIKEPENYGKTGKSDKQRDKMPATEMPK. A compositionally biased stretch (low complexity) spans 272 to 281; sequence PPSSTSSSGS. The SHP-box motif lies at 290–298; sequence FSGRGFVLG. The segment covering 302-311 has biased composition (polar residues); it reads QIPTNKQIQS. Residues 313–327 show a composition bias toward pro residues; sequence PKAPPEPLHSPPDSP. Residues 341 to 374 show a composition bias toward polar residues; it reads RLSSGTSNIPRKRSVGNTNAFINVNGSPVRISNG. Over residues 399–416 the composition is skewed to low complexity; sequence GASAVGSSKSSTDASTAD. The short motif at 451-458 is the PIP-box element; the sequence is ESNISKYF. Residues 473–608 form a disordered region; sequence TFGSPQKSAI…VRDQQANNPP (136 aa). Polar residues-rich tracts occupy residues 492–523 and 545–554; these read FGSNQRPDSTSSGIRNTGSPQRSHASATSGSS and SPRTSGTTPS. Positions 535-566 match the Nuclear localization signal motif; it reads SNFPSPRNIGSPRTSGTTPSGAKKRSWEEHNS. Composition is skewed to basic and acidic residues over residues 559–570 and 584–593; these read RSWEEHNSERVF and TDKKREEVRS. A UBZ4-type zinc finger spans residues 612-636; that stretch reads TVHCPVCHIRLPESTINDHLDSCLL. The Zn(2+) site is built by C615, C618, H630, and C634.

It belongs to the Spartan family. Homodimer. Zn(2+) serves as cofactor. Post-translationally, autocatalytically cleaved in response to double-stranded DNA-binding: autocatalytic cleavage takes place in trans and leads to inactivation.

Its subcellular location is the nucleus. The protein resides in the chromosome. Its activity is regulated as follows. DNA-binding activates the protease activity: single-stranded DNA-binding specifically activates ability to cleave covalent DNA-protein cross-links (DPCs). In contrast, double-stranded DNA-binding specifically activates autocatalytic cleavage, and subsequent inactivation. DNA-dependent metalloendopeptidase that mediates the proteolytic cleavage of covalent DNA-protein cross-links (DPCs) during DNA synthesis, thereby playing a key role in maintaining genomic integrity. DPCs are highly toxic DNA lesions that interfere with essential chromatin transactions, such as replication and transcription, and which are induced by reactive agents, such as UV light or formaldehyde. Associates with the DNA replication machinery and specifically removes DPCs during DNA synthesis. Catalyzes proteolytic cleavage of the hmces DNA-protein cross-link following unfolding by the brip1/fancj helicase. Acts as a pleiotropic protease for DNA-binding proteins cross-linked with DNA, such as top1, top2a, histones H3 and H4. Mediates degradation of DPCs that are not ubiquitinated, while it is not able to degrade ubiquitinated DPCs. SPRTN activation requires polymerase collision with DPCs followed by helicase bypass of DPCs. May also act as a 'reader' of ubiquitinated pcna: facilitates chromatin association of rad18 and is required for efficient pcna monoubiquitination, promoting a feed-forward loop to enhance pcna ubiquitination and translesion DNA synthesis. Acts as a regulator of translesion DNA synthesis by recruiting vcp/p97 to sites of DNA damage. The chain is DNA-dependent metalloprotease SPRTN from Danio rerio (Zebrafish).